The following is a 243-amino-acid chain: NEDD4-binding protein 2-like 1 (243 aa).

The disordered stretch occupies residues 1-38; that stretch reads MEDSFLQSFGRLSLQPQQQQQRQRPPRPPPRGTPPRRH.

In terms of assembly, interacts with dynactin subunit proteins, including DCTN4, DCTN5 and DCTN5.

Functionally, might play a role in adipocyte differentiation and triglyceride accumulation. This chain is NEDD4-binding protein 2-like 1 (N4BP2L1), found in Homo sapiens (Human).